A 435-amino-acid chain; its full sequence is Cyclin-dependent kinase 14 (435 aa).

Residues 75 to 92 (RTQSSFDPFEKTSNQPTS) are compositionally biased toward polar residues. Residues 75 to 97 (RTQSSFDPFEKTSNQPTSPKFGK) form a disordered region. Positions 101 to 385 (YEKLEKLGEG…AQAALNHDYF (285 aa)) constitute a Protein kinase domain. ATP is bound by residues 107 to 115 (LGEGSYATV) and lysine 130. Aspartate 222 acts as the Proton acceptor in catalysis.

It belongs to the protein kinase superfamily. CMGC Ser/Thr protein kinase family. CDC2/CDKX subfamily. In terms of assembly, interacts with ccny; ccny mediates its recruitment to the plasma membrane and promotes phosphorylation of lrp6.

The protein resides in the cell membrane. It catalyses the reaction L-seryl-[protein] + ATP = O-phospho-L-seryl-[protein] + ADP + H(+). The enzyme catalyses L-threonyl-[protein] + ATP = O-phospho-L-threonyl-[protein] + ADP + H(+). Its function is as follows. Serine/threonine-protein kinase involved in the control of the eukaryotic cell cycle, whose activity is controlled by an associated cyclin. Acts as a cell-cycle regulator of Wnt signaling pathway during G2/M phase by mediating the phosphorylation of lrp6, leading to the activation of the Wnt signaling pathway. This chain is Cyclin-dependent kinase 14 (cdk14), found in Xenopus laevis (African clawed frog).